A 2097-amino-acid polypeptide reads, in one-letter code: 1-phosphatidylinositol 3-phosphate 5-kinase (2097 aa).

The interval 1–44 is disordered; that stretch reads MATDDKSSPTLDSANDLPRSPASPSHLTHFKPLTPDQDEPPFKS. Position 2 is an N-acetylalanine (Ala-2). Ser-23 and Ser-48 each carry phosphoserine; by autocatalysis. The disordered stretch occupies residues 56–122; it reads NKERGEGGQG…AEPACGGHDP (67 aa). Positions 66-81 are enriched in low complexity; sequence EQQSPSSSWASPQIPS. Position 88 is a phosphoserine (Ser-88). Residues 158 to 218 form an FYVE-type zinc finger; it reads DSQCKECYDC…ACTYCRKIAL (61 aa). Zn(2+) contacts are provided by Cys-164, Cys-167, Cys-180, Cys-183, Cys-188, Cys-191, Cys-210, and Cys-213. Phosphoserine occurs at positions 299, 307, and 312. Ser-318 is modified (phosphoserine; by PKB/AKT1 or PKB/AKT2). Ser-329 bears the Phosphoserine mark. Positions 365 to 440 constitute a DEP domain; it reads HTSGMEFQDH…DEYALYRPLQ (76 aa). A compositionally biased stretch (polar residues) spans 442–459; it reads TEFSETPSPDSDSVNSVE. Residues 442–469 are disordered; it reads TEFSETPSPDSDSVNSVEGHSEPSWFKD. Residues 460 to 469 are compositionally biased toward basic and acidic residues; the sequence is GHSEPSWFKD. The residue at position 475 (Ser-475) is a Phosphoserine. The disordered stretch occupies residues 484-505; that stretch reads GDDNLANSASPSKRTSVSSFQS. A compositionally biased stretch (polar residues) spans 488-505; it reads LANSASPSKRTSVSSFQS. The segment at 616–868 is chaperonin-like domain; that stretch reads MMALLQQLLQ…MICVAYHSQL (253 aa). 4 disordered regions span residues 895-928, 989-1022, 1171-1194, and 1511-1555; these read GRGE…EDST, AVGN…QDDT, HSKD…EERG, and FQQE…HNGE. Positions 902 to 912 are enriched in polar residues; that stretch reads SQEQVSGSSLP. Residues 1175–1184 show a composition bias toward polar residues; sequence ASCTSGGKSG. The segment covering 1185 to 1194 has biased composition (basic and acidic residues); the sequence is NKTESDEERG. Ser-1543 and Ser-1548 each carry phosphoserine. Ser-1668 bears the Phosphoserine; by autocatalysis mark. The interval 1697 to 1742 is disordered; sequence EGLPANSALDNRPKSSSPIRLPEISGGQTNRTVEAEPQPTKKASGM. The residue at position 1753 (Ser-1753) is a Phosphoserine. A PIPK domain is found at 1757–2083; the sequence is SSQKRETLRG…RFCEAMDKYF (327 aa). The interval 1781-1800 is disordered; the sequence is GLESQGLEPQDEVDGGDTQK. Residues 1841-2097 are catalytic; the sequence is EEEFIRSLSH…DHWTGLDLNC (257 aa). Ser-1968 and Ser-2052 each carry phosphoserine; by autocatalysis.

As to quaternary structure, component of the PI(3,5)P2 regulatory complex/PAS complex, at least composed of PIKFYVE, FIG4 and VAC14. VAC14 nucleates the assembly of the complex and serves as a scaffold by pentamerizing into a star-shaped structure, which can bind a single copy each of PIKFYVE and FIG4 and coordinates their activities. Interacts (via chaperonin-like domain) with RABEPK; the interaction recruits RABEPK to the endosomal membrane. Interacts with SPAG9. Interacts with EGFR. Mn(2+) serves as cofactor. In terms of processing, phosphorylated in response to insulin at Ser-318 in a protein kinase B (PKB)-dependent manner. Autophosphorylates which down-regulates lipid product formation. Post-translationally, autophosphorylates which inhibits its own phosphatidylinositol 3-phosphate 5-kinase activity, stimulates FIG4 lipid phosphatase activity and down-regulates lipid product formation. Dephosphorylated by FIG4 in the PI(3,5)P2 regulatory complex, at Ser-48, Ser-1668 and Ser-2052. Phosphorylated in response to insulin at Ser-318 in a protein kinase B (PKB)-dependent manner. Ubiquitous.

It localises to the endosome membrane. Its subcellular location is the early endosome membrane. The protein localises to the cytoplasmic vesicle. It is found in the phagosome membrane. The protein resides in the late endosome membrane. It carries out the reaction a 1,2-diacyl-sn-glycero-3-phospho-(1D-myo-inositol-3-phosphate) + ATP = a 1,2-diacyl-sn-glycero-3-phospho-(1D-myo-inositol-3,5-bisphosphate) + ADP + H(+). The enzyme catalyses a 1,2-diacyl-sn-glycero-3-phospho-(1D-myo-inositol) + ATP = a 1,2-diacyl-sn-glycero-3-phospho-(1D-myo-inositol-5-phosphate) + ADP + H(+). The catalysed reaction is L-seryl-[protein] + ATP = O-phospho-L-seryl-[protein] + ADP + H(+). With respect to regulation, inhibited by apilimod and YM201636. Its function is as follows. Dual specificity kinase implicated in myriad essential cellular processes such as maintenance of endomembrane homeostasis, and endocytic-vacuolar pathway, lysosomal trafficking, nuclear transport, stress- or hormone-induced signaling and cell cycle progression. The PI(3,5)P2 regulatory complex regulates both the synthesis and turnover of phosphatidylinositol 3,5-bisphosphate (PtdIns(3,5)P2). Sole enzyme to catalyze the phosphorylation of phosphatidylinositol 3-phosphate on the fifth hydroxyl of the myo-inositol ring, to form (PtdIns(3,5)P2). Also catalyzes the phosphorylation of phosphatidylinositol on the fifth hydroxyl of the myo-inositol ring, to form phosphatidylinositol 5-phosphate (PtdIns(5)P). Has serine-protein kinase activity and is able to autophosphorylate and transphosphorylate. Autophosphorylation inhibits its own phosphatidylinositol 3-phosphate 5-kinase activity, stimulates FIG4 lipid phosphatase activity and down-regulates lipid product formation. Involved in key endosome operations such as fission and fusion in the course of endosomal cargo transport. Required for the maturation of early into late endosomes, phagosomes and lysosomes. Regulates vacuole maturation and nutrient recovery following engulfment of macromolecules, initiates the redistribution of accumulated lysosomal contents back into the endosome network. Critical regulator of the morphology, degradative activity, and protein turnover of the endolysosomal system in macrophages and platelets. In neutrophils, critical to perform chemotaxis, generate ROS, and undertake phagosome fusion with lysosomes. Plays a key role in the processing and presentation of antigens by major histocompatibility complex class II (MHC class II) mediated by CTSS. Regulates melanosome biogenesis by controlling the delivery of proteins from the endosomal compartment to the melanosome. Essential for systemic glucose homeostasis, mediates insulin-induced signals for endosome/actin remodeling in the course of GLUT4 translocation/glucose uptake activation. Supports microtubule-based endosome-to-trans-Golgi network cargo transport, trhough association with SPAG9 and RABEPK. Mediates EGFR trafficking to the nucleus. This is 1-phosphatidylinositol 3-phosphate 5-kinase from Mus musculus (Mouse).